Consider the following 444-residue polypeptide: Adenylyltransferase and sulfurtransferase UBA4 (444 aa).

ATP contacts are provided by residues Gly81, Asp102, 109-113 (SNLHR), Lys126, and 170-171 (DT). 2 residues coordinate Zn(2+): Cys212 and Cys215. Cys229 functions as the Glycyl thioester intermediate; for adenylyltransferase activity in the catalytic mechanism. 2 residues coordinate Zn(2+): Cys290 and Cys293. One can recognise a Rhodanese domain in the interval 343-442 (KTKPYVLLDV…YIDEINPSLP (100 aa)). Cys401 serves as the catalytic Cysteine persulfide intermediate; for sulfurtransferase activity.

This sequence in the N-terminal section; belongs to the HesA/MoeB/ThiF family. UBA4 subfamily. Zn(2+) is required as a cofactor.

The protein localises to the cytoplasm. It is found in the cytosol. Its pathway is tRNA modification; 5-methoxycarbonylmethyl-2-thiouridine-tRNA biosynthesis. Functionally, plays a central role in 2-thiolation of mcm(5)S(2)U at tRNA wobble positions of cytosolic tRNA(Lys), tRNA(Glu) and tRNA(Gln). Acts by mediating the C-terminal thiocarboxylation of sulfur carrier URM1. Its N-terminus first activates URM1 as acyl-adenylate (-COAMP), then the persulfide sulfur on the catalytic cysteine is transferred to URM1 to form thiocarboxylation (-COSH) of its C-terminus. The reaction probably involves hydrogen sulfide that is generated from the persulfide intermediate and that acts as a nucleophile towards URM1. Subsequently, a transient disulfide bond is formed. Does not use thiosulfate as sulfur donor; NFS1 probably acting as a sulfur donor for thiocarboxylation reactions. Prior mcm(5) tRNA modification by the elongator complex is required for 2-thiolation. May also be involved in protein urmylation. This Kluyveromyces lactis (strain ATCC 8585 / CBS 2359 / DSM 70799 / NBRC 1267 / NRRL Y-1140 / WM37) (Yeast) protein is Adenylyltransferase and sulfurtransferase UBA4.